The sequence spans 230 residues: 7-cyano-7-deazaguanine synthase (230 aa).

Position 8–18 (8–18 (LSGGMDSAVVT)) interacts with ATP. Positions 186, 196, 199, and 202 each coordinate Zn(2+).

It belongs to the QueC family. Zn(2+) is required as a cofactor.

It catalyses the reaction 7-carboxy-7-deazaguanine + NH4(+) + ATP = 7-cyano-7-deazaguanine + ADP + phosphate + H2O + H(+). It participates in purine metabolism; 7-cyano-7-deazaguanine biosynthesis. Its function is as follows. Catalyzes the ATP-dependent conversion of 7-carboxy-7-deazaguanine (CDG) to 7-cyano-7-deazaguanine (preQ(0)). This Xylella fastidiosa (strain M23) protein is 7-cyano-7-deazaguanine synthase.